A 340-amino-acid chain; its full sequence is DNA-directed RNA polymerase subunit alpha (340 aa).

The interval 1–236 (MLSLSKNWNT…EQLQLFISFE (236 aa)) is alpha N-terminal domain (alpha-NTD). Residues 251-340 (FSPYLLKRVD…LSKRYEDSYN (90 aa)) form an alpha C-terminal domain (alpha-CTD) region.

This sequence belongs to the RNA polymerase alpha chain family. Homodimer. The RNAP catalytic core consists of 2 alpha, 1 beta, 1 beta' and 1 omega subunit. When a sigma factor is associated with the core the holoenzyme is formed, which can initiate transcription.

It carries out the reaction RNA(n) + a ribonucleoside 5'-triphosphate = RNA(n+1) + diphosphate. Functionally, DNA-dependent RNA polymerase catalyzes the transcription of DNA into RNA using the four ribonucleoside triphosphates as substrates. This is DNA-directed RNA polymerase subunit alpha from Rickettsia conorii (strain ATCC VR-613 / Malish 7).